Here is an 86-residue protein sequence, read N- to C-terminus: Maxadilan (86 aa).

A signal peptide spans 1 to 23 (MKQILLISLVVVLAVFAFNVAEG). Intrachain disulfides connect cysteine 24–cysteine 28 and cysteine 37–cysteine 74.

As to quaternary structure, interacts with human ADCYAP1R1. Salivary gland (at protein level).

It localises to the secreted. Potent vasodilator. Activates mammalian ADCYAP1R1, a PAC1 receptor, and induces cAMP accumulation in host cells. Causes the development of erythema following superficial injection into the rabbit or human skin. Influences adaptive immune responses mediated by host dendritic cells. Reduces surface expression of CD80 on host dendritic cells stimulated with lipopolysaccharides (LPS) and induces concomitant increase in CD86 expression on a subpopulation of these cells. Redirects cytokine secretion by LPS-activated host dendritic cells toward type 2 responses: decreases secretion of TNF-alpha/TNF, IL-12p40/IL12B and IFN-gamma/IFNG, and increases secretion of IL6 and IL10. Reduces ability of host bone marrow-derived dendritic cells to stimulate proliferation of CD4(+) T-cells. Reprograms the effect of LPS-activated host dendritic cells on cytokine secretion profiles in host T-cells: decreases secretion of TNF-alpha/TNF and IFN-gamma/IFNG, increases secretion of IL6 and IL13, and increases secretion of pro-inflammatory cytokine IL-1beta/IL1B in mixed lymphocyte reaction (MLR) cultures. Reduces LPS-induced up-regulation of CCR7 in activated host dendritic cells. Inhibits IFN-gamma/IFNG and IL-12p40/IL12B production by human peripheral blood mononuclear cells. Increases IL6 and decreases TNF-alpha/TNF production by LPS-stimulated human monocytes. Its function is as follows. (Microbial infection) Probably plays a critical role in the enhancement of Leishmania infectivity in the host attributed to sand fly saliva. In Lutzomyia longipalpis (Sand fly), this protein is Maxadilan.